We begin with the raw amino-acid sequence, 239 residues long: Protein G1-like8 (239 aa).

Disordered stretches follow at residues 1–35 and 149–239; these read MEGGGGGADAQAQAQPVAQAPPAMQPMQQLSRYES and KARG…ATRV. Positions 9–29 are enriched in low complexity; that stretch reads DAQAQAQPVAQAPPAMQPMQQ. An ALOG domain is found at 32-159; the sequence is RYESQKRRDW…ARGIPYEKKK (128 aa). The Nuclear localization signal signature appears at 157 to 161; that stretch reads KKKRK. The segment covering 167 to 178 has biased composition (pro residues); that stretch reads QPPPQPPLPPQH. Composition is skewed to low complexity over residues 179 to 215 and 223 to 239; these read QPGAAAGEASSSSSAAAAAVAAEGSGSSAATAAATSQ and TTTTTASAAAPTTATRV.

This sequence belongs to the plant homeotic and developmental regulators ALOG protein family.

The protein resides in the nucleus. Probable transcription regulator that acts as a developmental regulator by promoting cell growth in response to light. This chain is Protein G1-like8, found in Oryza sativa subsp. indica (Rice).